Here is a 271-residue protein sequence, read N- to C-terminus: Glutamate racemase (271 aa).

Substrate contacts are provided by residues 10–11 (DS) and 42–43 (YG). Residue C73 is the Proton donor/acceptor of the active site. Residue 74-75 (NS) participates in substrate binding. The active-site Proton donor/acceptor is C183. A substrate-binding site is contributed by 184–185 (TH).

Belongs to the aspartate/glutamate racemases family.

It catalyses the reaction L-glutamate = D-glutamate. Its pathway is cell wall biogenesis; peptidoglycan biosynthesis. Its function is as follows. Provides the (R)-glutamate required for cell wall biosynthesis. The polypeptide is Glutamate racemase (Saccharopolyspora erythraea (strain ATCC 11635 / DSM 40517 / JCM 4748 / NBRC 13426 / NCIMB 8594 / NRRL 2338)).